Here is a 284-residue protein sequence, read N- to C-terminus: Tryptophan synthase alpha chain (284 aa).

Active-site proton acceptor residues include E59 and D70.

This sequence belongs to the TrpA family. Tetramer of two alpha and two beta chains.

It carries out the reaction (1S,2R)-1-C-(indol-3-yl)glycerol 3-phosphate + L-serine = D-glyceraldehyde 3-phosphate + L-tryptophan + H2O. It functions in the pathway amino-acid biosynthesis; L-tryptophan biosynthesis; L-tryptophan from chorismate: step 5/5. Its function is as follows. The alpha subunit is responsible for the aldol cleavage of indoleglycerol phosphate to indole and glyceraldehyde 3-phosphate. This Azospirillum brasilense protein is Tryptophan synthase alpha chain.